The following is a 370-amino-acid chain: S-adenosylmethionine:tRNA ribosyltransferase-isomerase (370 aa).

It belongs to the QueA family. Monomer.

It is found in the cytoplasm. It catalyses the reaction 7-aminomethyl-7-carbaguanosine(34) in tRNA + S-adenosyl-L-methionine = epoxyqueuosine(34) in tRNA + adenine + L-methionine + 2 H(+). It participates in tRNA modification; tRNA-queuosine biosynthesis. In terms of biological role, transfers and isomerizes the ribose moiety from AdoMet to the 7-aminomethyl group of 7-deazaguanine (preQ1-tRNA) to give epoxyqueuosine (oQ-tRNA). The chain is S-adenosylmethionine:tRNA ribosyltransferase-isomerase from Prochlorococcus marinus (strain SARG / CCMP1375 / SS120).